We begin with the raw amino-acid sequence, 237 residues long: Uridylate kinase (237 aa).

An ATP-binding site is contributed by 11 to 14 (KLSG). Glycine 53 provides a ligand contact to UMP. The ATP site is built by glycine 54 and arginine 58. UMP-binding positions include aspartate 73 and 134–141 (TGNPFFTT). Residues threonine 161, tyrosine 167, and aspartate 170 each coordinate ATP.

Belongs to the UMP kinase family. Homohexamer.

The protein resides in the cytoplasm. The enzyme catalyses UMP + ATP = UDP + ADP. The protein operates within pyrimidine metabolism; CTP biosynthesis via de novo pathway; UDP from UMP (UMPK route): step 1/1. With respect to regulation, inhibited by UTP. In terms of biological role, catalyzes the reversible phosphorylation of UMP to UDP. The sequence is that of Uridylate kinase from Burkholderia thailandensis (strain ATCC 700388 / DSM 13276 / CCUG 48851 / CIP 106301 / E264).